The following is an 828-amino-acid chain: Periplasmic nitrate reductase (828 aa).

The segment at residues 1 to 31 is a signal peptide (tat-type signal); that stretch reads MKLSRRSFMKANAVAAAAAAAGLSVPGVARA. Residues 39-95 form the 4Fe-4S Mo/W bis-MGD-type domain; it reads IKWDKAPCRFCGTGCGVLVGTQQGRVVACQGDPDAPVNRGLNCIKGYFLPKIMYGKD. Positions 46, 49, 53, and 81 each coordinate [4Fe-4S] cluster. Mo-bis(molybdopterin guanine dinucleotide) contacts are provided by residues Lys-83, Gln-150, Asn-175, Cys-179, 212 to 219, 243 to 247, 262 to 264, Met-372, Gln-376, Asn-482, 508 to 509, Lys-531, Asp-558, and 718 to 727; these read WGANMAEM, STYQH, QSD, SD, and TGRVLEHWHT. Residue Phe-794 participates in substrate binding. Asn-802 and Lys-819 together coordinate Mo-bis(molybdopterin guanine dinucleotide).

The protein belongs to the prokaryotic molybdopterin-containing oxidoreductase family. NasA/NapA/NarB subfamily. Component of the periplasmic nitrate reductase NapAB complex composed of NapA and NapB. It depends on [4Fe-4S] cluster as a cofactor. The cofactor is Mo-bis(molybdopterin guanine dinucleotide). In terms of processing, predicted to be exported by the Tat system. The position of the signal peptide cleavage has not been experimentally proven.

It localises to the periplasm. It carries out the reaction 2 Fe(II)-[cytochrome] + nitrate + 2 H(+) = 2 Fe(III)-[cytochrome] + nitrite + H2O. Its function is as follows. Catalytic subunit of the periplasmic nitrate reductase complex NapAB. Receives electrons from NapB and catalyzes the reduction of nitrate to nitrite. This is Periplasmic nitrate reductase from Shigella boydii serotype 18 (strain CDC 3083-94 / BS512).